The chain runs to 198 residues: Probable opine utilization operon repressor (198 aa).

It participates in opine metabolism; mannopine biosynthesis [regulation]. Its function is as follows. Possible repressor for genes for mannityl-opine utilization and / or plasmid conjugative transfer. The chain is Probable opine utilization operon repressor (opnR) from Rhizobium rhizogenes (Agrobacterium rhizogenes).